The sequence spans 122 residues: MIQMQSTLDVACNSGARRVQCIKVLGGSHRRYAGIGDIIKVSVKEAIPRAKAKKGDVYNAVVVRTKKGVRRPDGSVIRFDRNAAVLLNNNLQPIGTRIFGPVTRELRTEQFMKIVSLAPEVL.

This sequence belongs to the universal ribosomal protein uL14 family. Part of the 50S ribosomal subunit. Forms a cluster with proteins L3 and L19. In the 70S ribosome, L14 and L19 interact and together make contacts with the 16S rRNA in bridges B5 and B8.

Its function is as follows. Binds to 23S rRNA. Forms part of two intersubunit bridges in the 70S ribosome. The polypeptide is Large ribosomal subunit protein uL14 (Shewanella amazonensis (strain ATCC BAA-1098 / SB2B)).